The primary structure comprises 383 residues: 6-hydroxynicotinate 3-monooxygenase (383 aa).

Residues 1 to 26 (MQGKPRIAVIGAGLGGTAGAALMARA) form the signal peptide. FAD contacts are provided by residues Gly15, 34 to 35 (EQ), His47, Arg108, and Leu130. His47 functions as the Proton acceptor in the catalytic mechanism. The active-site Proton acceptor is the Tyr214. Residues Asp293 and 306–307 (AA) contribute to the FAD site.

The protein belongs to the 6-hydroxynicotinate 3-monooxygenase family. Monomer. FAD serves as cofactor.

The catalysed reaction is 6-hydroxynicotinate + NADH + O2 + 2 H(+) = 2,5-dihydroxypyridine + CO2 + NAD(+) + H2O. It functions in the pathway cofactor degradation; nicotinate degradation. Competitively inhibited by 6-hydroxynicotinaldehyde. Its function is as follows. Flavin-dependent monooxygenase (FMO) that catalyzes the decarboxylative hydroxylation of 6-hydroxynicotinic acid (6-HNA) to 2,5-dihydroxypyridine (2,5-DHP) with concomitant oxidation of NADH, a step in the aerobic nicotinate degradation pathway. Is also active on the non-natural substrate 5-chloro-6-hydroxynicotinate, and is much less efficient on the substrate analog 4-hydroxybenzoate. The protein is 6-hydroxynicotinate 3-monooxygenase of Bordetella bronchiseptica (strain ATCC BAA-588 / NCTC 13252 / RB50) (Alcaligenes bronchisepticus).